Consider the following 172-residue polypeptide: Protein-export protein SecB (172 aa).

The interval 153-172 is disordered; it reads AQGQGGDSGIVMPDGSQARH.

The protein belongs to the SecB family. Homotetramer, a dimer of dimers. One homotetramer interacts with 1 SecA dimer.

The protein resides in the cytoplasm. Its function is as follows. One of the proteins required for the normal export of preproteins out of the cell cytoplasm. It is a molecular chaperone that binds to a subset of precursor proteins, maintaining them in a translocation-competent state. It also specifically binds to its receptor SecA. The chain is Protein-export protein SecB from Cupriavidus metallidurans (strain ATCC 43123 / DSM 2839 / NBRC 102507 / CH34) (Ralstonia metallidurans).